Reading from the N-terminus, the 137-residue chain is Putative mucosal pentraxin homolog (137 aa).

The Pentraxin (PTX) domain occupies 1-137 (MGMYLLHIGN…YVVTKPKVWA (137 aa)). Ca(2+)-binding residues include Glu73, Asp75, and Gln85.

It belongs to the pentraxin family. As to expression, not expressed in the intestinal tract including ascending colon, descending colon and rectum. Not expressed in the human colon cancer cell lines HT-29 and CaCo-2.

The polypeptide is Putative mucosal pentraxin homolog (MPTX1) (Homo sapiens (Human)).